Consider the following 240-residue polypeptide: Uridylate kinase (240 aa).

Residues 15–18 (KISG), Gly58, and Arg62 each bind ATP. UMP contacts are provided by residues Asp77 and 138–145 (TGNPLFTT). 3 residues coordinate ATP: Thr165, Tyr171, and Asp174.

Belongs to the UMP kinase family. Homohexamer.

It localises to the cytoplasm. The enzyme catalyses UMP + ATP = UDP + ADP. It functions in the pathway pyrimidine metabolism; CTP biosynthesis via de novo pathway; UDP from UMP (UMPK route): step 1/1. With respect to regulation, inhibited by UTP. Functionally, catalyzes the reversible phosphorylation of UMP to UDP. The sequence is that of Uridylate kinase from Buchnera aphidicola subsp. Schizaphis graminum (strain Sg).